A 479-amino-acid chain; its full sequence is Muscarinic acetylcholine receptor M4 (479 aa).

Residues 1-31 are Extracellular-facing; that stretch reads MANFTPVNGSSGNQSVRLVTSSSHNRYETVE. N-linked (GlcNAc...) asparagine glycans are attached at residues asparagine 8 and asparagine 13. Residues 32–54 form a helical membrane-spanning segment; sequence MVFIATVTGSLSLVTVVGNILVM. The Cytoplasmic segment spans residues 55–68; that stretch reads LSIKVNRQLQTVNN. Residues 69–89 traverse the membrane as a helical segment; sequence YFLFSLACADLIIGAFSMNLY. At 90-106 the chain is on the extracellular side; it reads TVYIIKGYWPLGAVVCD. An intrachain disulfide couples cysteine 105 to cysteine 185. Residues 107–128 traverse the membrane as a helical segment; it reads LWLALDYVVSNASVMNLLIISF. Residues 129–148 are Cytoplasmic-facing; it reads DRYFCVTKPLTYPARRTTKM. Residues 149–171 form a helical membrane-spanning segment; it reads AGLMIAAAWVLSFVLWAPAILFW. Topologically, residues 172–193 are extracellular; sequence QFVVGKRTVPDNQCFIQFLSNP. A helical membrane pass occupies residues 194 to 216; the sequence is AVTFGTAIAAFYLPVVIMTVLYI. Residues 217-401 lie on the Cytoplasmic side of the membrane; it reads HISLASRSRV…AARERKVTRT (185 aa). The tract at residues 271 to 333 is disordered; it reads KLEEAPPPAL…PAPPLQPRAL (63 aa). Residues 275 to 286 are compositionally biased toward pro residues; sequence APPPALPPPPRP. A compositionally biased stretch (polar residues) spans 294-304; it reads NESSSGSATQN. Residues 402-422 traverse the membrane as a helical segment; that stretch reads IFAILLAFILTWTPYNVMVLV. Topologically, residues 423–436 are extracellular; the sequence is NTFCQSCIPDTVWS. Residues 437-456 form a helical membrane-spanning segment; that stretch reads IGYWLCYVNSTINPACYALC. Over 457–479 the chain is Cytoplasmic; that stretch reads NATFKKTFRHLLLCQYRNIGTAR. Residues threonine 459, threonine 463, and threonine 477 each carry the phosphothreonine modification.

Belongs to the G-protein coupled receptor 1 family. Muscarinic acetylcholine receptor subfamily. CHRM4 sub-subfamily.

It is found in the cell membrane. It localises to the postsynaptic cell membrane. Its function is as follows. The muscarinic acetylcholine receptor mediates various cellular responses, including inhibition of adenylate cyclase, breakdown of phosphoinositides and modulation of potassium channels through the action of G proteins. Primary transducing effect is inhibition of adenylate cyclase. The chain is Muscarinic acetylcholine receptor M4 (CHRM4) from Homo sapiens (Human).